The sequence spans 133 residues: IgW chain C region, secreted form 2 (133 aa).

Positions 1–71 (VISGFYPDSV…TGSRFNDRIS (71 aa)) constitute an Ig-like domain. 2 N-linked (GlcNAc...) asparagine glycosylation sites follow: Asn-32 and Asn-112. The secretory tail stretch occupies residues 76 to 133 (KGGTVNLPVPGGNTPCTCPPSSCSGCMPKLVYQTDLNVTLENGGQLQYNCHQQACKIK).

Expressed mainly in lymphoid tissues including spleen, epigonal organ and circulating lymphocytes.

Its subcellular location is the secreted. The polypeptide is IgW chain C region, secreted form 2 (Heterodontus francisci (Horn shark)).